Reading from the N-terminus, the 217-residue chain is Probable transaldolase (217 aa).

Residue Lys83 is the Schiff-base intermediate with substrate of the active site.

Belongs to the transaldolase family. Type 3B subfamily.

It is found in the cytoplasm. It catalyses the reaction D-sedoheptulose 7-phosphate + D-glyceraldehyde 3-phosphate = D-erythrose 4-phosphate + beta-D-fructose 6-phosphate. It functions in the pathway carbohydrate degradation; pentose phosphate pathway; D-glyceraldehyde 3-phosphate and beta-D-fructose 6-phosphate from D-ribose 5-phosphate and D-xylulose 5-phosphate (non-oxidative stage): step 2/3. In terms of biological role, transaldolase is important for the balance of metabolites in the pentose-phosphate pathway. In Anaeromyxobacter sp. (strain K), this protein is Probable transaldolase.